The primary structure comprises 621 residues: Glutathione-regulated potassium-efflux system protein KefC (621 aa).

Transmembrane regions (helical) follow at residues 4 to 24, 26 to 46, 54 to 74, 90 to 110, 114 to 134, 151 to 171, 178 to 198, 218 to 238, 270 to 290, 294 to 314, 327 to 347, and 359 to 379; these read HTLI…PVAV, LGLG…PWGF, SILH…GLEL, GALQ…LLGM, VAEL…MQAM, VLLF…LLAV, LGAF…VILL, VFSA…EEAG, GLLL…GTLV, LRIL…LWLI, WFAV…GAAQ, and ALTL…VLLT. The 120-residue stretch at 399–518 folds into the RCK N-terminal domain; the sequence is QPRVIIAGFG…AGVETPERET (120 aa). The segment at 591 to 621 is disordered; the sequence is LSLTQRHGWQGTEEGKHTGDPRDEPESKPTV. Residues 603 to 621 are compositionally biased toward basic and acidic residues; the sequence is EEGKHTGDPRDEPESKPTV.

Belongs to the monovalent cation:proton antiporter 2 (CPA2) transporter (TC 2.A.37) family. KefC subfamily. As to quaternary structure, homodimer. Interacts with the regulatory subunit KefF.

The protein localises to the cell inner membrane. Functionally, pore-forming subunit of a potassium efflux system that confers protection against electrophiles. Catalyzes K(+)/H(+) antiport. The polypeptide is Glutathione-regulated potassium-efflux system protein KefC (Enterobacter sp. (strain 638)).